A 264-amino-acid chain; its full sequence is Apolipoprotein A-I (264 aa).

An N-terminal signal peptide occupies residues 1-18 (MRGVLVTLAVLFLTGTQA). 2 repeat units span residues 67 to 88 (LKLADNLDTLSAAAAKLREDMT) and 89 to 110 (PYYREVREMWLKDTEALRAELT). The tract at residues 67-264 (LKLADNLDTL…LLDEVQKTMA (198 aa)) is 10 X approximate tandem repeats. The 3; half-length repeat unit spans residues 111–121 (KDLEEVKEKIR). Repeat copies occupy residues 122–143 (PFLDQFSAKWTEEVEQYRQRLA), 144–165 (PVAQELKDLTKQKVELMQAKLT), 166–187 (PVAEEVRDRLREQVEELRKNLA), 188–209 (PYSSELRQKLSQKLEEIRERGI), and 210–231 (PQASEYQAKVVEQLSNLREKMT). One copy of the 9; half-length repeat lies at 232-242 (PLVQEFKERLT). Residues 243–264 (PYAENLKNRLIDLLDEVQKTMA) form repeat 10.

Belongs to the apolipoprotein A1/A4/E family. In terms of tissue distribution, major protein of VLDL, HDL, LDL and in chylomicrons. Expressed in a number of tissues including liver, small intestine, lung, kidney, heart and muscle with highest expression in liver and small intestine.

Its subcellular location is the secreted. Functionally, participates in the reverse transport of cholesterol from tissues to the liver for excretion by promoting cholesterol efflux from tissues and by acting as a cofactor for the lecithin cholesterol acyltransferase (LCAT). In Coturnix japonica (Japanese quail), this protein is Apolipoprotein A-I (APOA1).